Consider the following 582-residue polypeptide: Potassium-transporting ATPase potassium-binding subunit (582 aa).

10 consecutive transmembrane segments (helical) span residues A11–V31, L81–F101, F148–F168, L195–I215, V272–V292, G298–V318, A379–G399, G401–G421, V439–V459, and G551–F571.

The protein belongs to the KdpA family. As to quaternary structure, the system is composed of three essential subunits: KdpA, KdpB and KdpC.

The protein resides in the cell membrane. Its function is as follows. Part of the high-affinity ATP-driven potassium transport (or Kdp) system, which catalyzes the hydrolysis of ATP coupled with the electrogenic transport of potassium into the cytoplasm. This subunit binds the extracellular potassium ions and delivers the ions to the membrane domain of KdpB through an intramembrane tunnel. This is Potassium-transporting ATPase potassium-binding subunit from Halobacterium salinarum (strain ATCC 700922 / JCM 11081 / NRC-1) (Halobacterium halobium).